The following is a 314-amino-acid chain: DNA-directed RNA polymerase subunit alpha (314 aa).

The tract at residues 1–228 (MAQFHYECVE…SLFEPLKDIT (228 aa)) is alpha N-terminal domain (alpha-NTD). The segment at 240-314 (DPTSQIPIEE…LPQEKVAKAT (75 aa)) is alpha C-terminal domain (alpha-CTD).

This sequence belongs to the RNA polymerase alpha chain family. In cyanobacteria the RNAP catalytic core is composed of 2 alpha, 1 beta, 1 beta', 1 gamma and 1 omega subunit. When a sigma factor is associated with the core the holoenzyme is formed, which can initiate transcription.

It carries out the reaction RNA(n) + a ribonucleoside 5'-triphosphate = RNA(n+1) + diphosphate. In terms of biological role, DNA-dependent RNA polymerase catalyzes the transcription of DNA into RNA using the four ribonucleoside triphosphates as substrates. The chain is DNA-directed RNA polymerase subunit alpha from Trichodesmium erythraeum (strain IMS101).